An 887-amino-acid chain; its full sequence is MLRSLLLLAPMVGAAVAATEPNSPACPGYRATNVREGHNSLTADLTLAGKPCNTYGTDLKNLKLLVEYQTDERLHVKIYDANEQVYQVPESVVPRVDGKGGSRKKSVLKFNFKANPFSFQVKRGREVLFDTSGSNLVFQDQYLNLRTSLPRDPNLYGLGEHTDPLRLTTTNYTRTLWNRDSYGIPENSNLYGSHPVYYDHRGEDGTHGVFLLNSNGMDIKIDKTKDGKQFLEYNALGGIFDFYFFNGDTPKDASIEYAKVAGLPAMQSYWSFGFHQCRYGYRDAFEVAEVVQNYTQAKIPLETMWTDIDYMDRRRVFTLDPDRFPLEKVRELVSYLHKHDQKYIVMVDPAVSVSDNKGFNDGMEQGVFMKHQNGSLYKGAVWPGVTAYPDWFHPDIQKYWDGQFNDFFSPEKGVDIDGLWIDMNEAANFCTYPCLDPEGYSIENNLPPAAPPVRPNPRPLPGFPDDFQPPAASKRSVAKGSKVGLPGRDLLNPRYQIRNDAGLISSKTINTDLIHAGEGYAEYDTHNLYGTMMSSASRQSMAQRRPAVRPLIITRSTFAGAGTHVGHWLGDNLADWKHYRISIAQMLSFASMFQVPMVGSDICGFGGDTNEELCARWARLGAFYPFFRNHNEITSIPQEFYRWESVAESARKAIEVRYKLLDYVYTAFHRQTQTGEPFLQPMFYMYPEDKNTFSNDMQFFYGDSILVSPVHDVSQTSVEAYFPKDIFYDWNTGDVLRGRGAKVTLSNISVTDIPIHIRGGSIVPIRSESAMTTVELRKKGFELLIAPGQDGTASGTLYLDDGDSLKQSASLELEFKYRKGNLQIKGKFGMHTDLKINAITLLGQTSVPRQVTLSRAGKADSKFDPARQSVTIKTDLSLNESSEIDIN.

A signal peptide spans 1–17 (MLRSLLLLAPMVGAAVA). N-linked (GlcNAc...) asparagine glycosylation is found at Asn-171, Asn-293, and Asn-373. Asp-422 functions as the Nucleophile in the catalytic mechanism. Residue Glu-425 is part of the active site. A disordered region spans residues 457-483 (PRPLPGFPDDFQPPAASKRSVAKGSKV). The Proton donor role is filled by Asp-571. Asn-747 and Asn-879 each carry an N-linked (GlcNAc...) asparagine glycan.

Belongs to the glycosyl hydrolase 31 family.

It localises to the secreted. The catalysed reaction is Hydrolysis of terminal, non-reducing (1-&gt;4)-linked alpha-D-glucose residues with release of alpha-D-glucose.. The enzyme catalyses Hydrolysis of terminal, non-reducing beta-D-glucosyl residues with release of beta-D-glucose.. Its function is as follows. Glucosidase involved in the degradation of cellulosic biomass. Has both alpha- and beta-glucosidase activity. The chain is Probable alpha/beta-glucosidase agdC (agdC) from Aspergillus clavatus (strain ATCC 1007 / CBS 513.65 / DSM 816 / NCTC 3887 / NRRL 1 / QM 1276 / 107).